The primary structure comprises 245 residues: Dehydrogenase/reductase SDR family member 6 (245 aa).

Residues 16–18 (QGI), Asp-37, and Asp-58 contribute to the NAD(+) site. Residue Arg-144 coordinates substrate. Tyr-147 acts as the Proton acceptor in catalysis. NAD(+) is bound by residues Lys-151 and 180–184 (VDTPS). Residues Arg-188 and Arg-205 each coordinate substrate.

The protein belongs to the short-chain dehydrogenases/reductases (SDR) family. As to quaternary structure, homotetramer. In terms of tissue distribution, detected in liver (at protein level).

The protein localises to the cytoplasm. The catalysed reaction is cis-4-hydroxy-L-proline + NAD(+) = 4-oxo-L-proline + NADH + H(+). The enzyme catalyses (R)-3-hydroxybutanoate + NAD(+) = acetoacetate + NADH + H(+). Its pathway is amino-acid metabolism. It participates in siderophore biosynthesis. NAD(H)-dependent dehydrogenase/reductase with a preference for cyclic substrates. Catalyzes stereoselective conversion of 4-oxo-L-proline to cis-4-hydroxy-L-proline, likely a detoxification mechanism for ketoprolines. Mediates the formation of 2,5-dihydroxybenzoate (2,5-DHBA), a siderophore that chelates free cytoplasmic iron and associates with LCN2, thereby regulating iron transport and homeostasis while protecting cells against free radical-induced oxidative stress. The iron-siderophore complex is imported into mitochondria, providing an iron source for mitochondrial metabolic processes in particular heme synthesis. May act as a 3-hydroxybutyrate dehydrogenase. This is Dehydrogenase/reductase SDR family member 6 from Homo sapiens (Human).